The chain runs to 566 residues: E3 ubiquitin-protein ligase RNF220 (566 aa).

Lys-277 is covalently cross-linked (Glycyl lysine isopeptide (Lys-Gly) (interchain with G-Cter in SUMO2)). The disordered stretch occupies residues 277-297 (KREGESPTASPHSSATDDLHH). Ser-390 carries the post-translational modification Phosphoserine. Residues 485 to 513 (EDSAVTTFEALKARVRELERQLSRGDRYK) adopt a coiled-coil conformation. Residues 514-522 (CLICMDSYS) form a required for targeting to the cytoplasm region. The segment at 514–553 (CLICMDSYSMPLTSIQCWHVHCEECWLRTLGAKKLCPQCN) adopts an RING-type zinc-finger fold.

Interacts with SIN3B. Interacts with CTNNB1 (via Armadillo repeats 2-8). Interacts with USP7 (via MATH domain). In terms of processing, auto-ubiquitinated; leads to proteasomal degradation.

It localises to the cytoplasm. It is found in the nucleus. The enzyme catalyses S-ubiquitinyl-[E2 ubiquitin-conjugating enzyme]-L-cysteine + [acceptor protein]-L-lysine = [E2 ubiquitin-conjugating enzyme]-L-cysteine + N(6)-ubiquitinyl-[acceptor protein]-L-lysine.. Its pathway is protein modification; protein ubiquitination. Functionally, E3 ubiquitin-protein ligase that promotes the ubiquitination and proteasomal degradation of SIN3B. Independently of its E3 ligase activity, acts as a CTNNB1 stabilizer through USP7-mediated deubiquitination of CTNNB1 and promotes Wnt signaling. Plays a critical role in the regulation of nuclear lamina. This is E3 ubiquitin-protein ligase RNF220 (RNF220) from Macaca fascicularis (Crab-eating macaque).